The following is a 276-amino-acid chain: Diaminopimelate epimerase (276 aa).

Substrate-binding residues include asparagine 13, glutamine 46, and asparagine 66. The Proton donor role is filled by cysteine 75. Residues 76 to 77, asparagine 159, asparagine 192, and 210 to 211 contribute to the substrate site; these read GN and ER. Cysteine 219 functions as the Proton acceptor in the catalytic mechanism. 220–221 contacts substrate; the sequence is GT.

It belongs to the diaminopimelate epimerase family. As to quaternary structure, homodimer.

It is found in the cytoplasm. It carries out the reaction (2S,6S)-2,6-diaminopimelate = meso-2,6-diaminopimelate. Its pathway is amino-acid biosynthesis; L-lysine biosynthesis via DAP pathway; DL-2,6-diaminopimelate from LL-2,6-diaminopimelate: step 1/1. Functionally, catalyzes the stereoinversion of LL-2,6-diaminopimelate (L,L-DAP) to meso-diaminopimelate (meso-DAP), a precursor of L-lysine and an essential component of the bacterial peptidoglycan. The protein is Diaminopimelate epimerase of Teredinibacter turnerae (strain ATCC 39867 / T7901).